The chain runs to 333 residues: 4-hydroxy-3-methylbut-2-enyl diphosphate reductase (333 aa).

Cysteine 20 is a binding site for [4Fe-4S] cluster. (2E)-4-hydroxy-3-methylbut-2-enyl diphosphate is bound by residues histidine 49 and histidine 85. Histidine 49 and histidine 85 together coordinate dimethylallyl diphosphate. Histidine 49 and histidine 85 together coordinate isopentenyl diphosphate. A [4Fe-4S] cluster-binding site is contributed by cysteine 107. Histidine 135 contributes to the (2E)-4-hydroxy-3-methylbut-2-enyl diphosphate binding site. Residue histidine 135 participates in dimethylallyl diphosphate binding. Residue histidine 135 participates in isopentenyl diphosphate binding. The Proton donor role is filled by glutamate 137. Position 176 (threonine 176) interacts with (2E)-4-hydroxy-3-methylbut-2-enyl diphosphate. Cysteine 206 provides a ligand contact to [4Fe-4S] cluster. (2E)-4-hydroxy-3-methylbut-2-enyl diphosphate-binding residues include serine 234, serine 235, asparagine 236, and serine 279. Residues serine 234, serine 235, asparagine 236, and serine 279 each coordinate dimethylallyl diphosphate. Serine 234, serine 235, asparagine 236, and serine 279 together coordinate isopentenyl diphosphate.

This sequence belongs to the IspH family. The cofactor is [4Fe-4S] cluster.

The enzyme catalyses isopentenyl diphosphate + 2 oxidized [2Fe-2S]-[ferredoxin] + H2O = (2E)-4-hydroxy-3-methylbut-2-enyl diphosphate + 2 reduced [2Fe-2S]-[ferredoxin] + 2 H(+). The catalysed reaction is dimethylallyl diphosphate + 2 oxidized [2Fe-2S]-[ferredoxin] + H2O = (2E)-4-hydroxy-3-methylbut-2-enyl diphosphate + 2 reduced [2Fe-2S]-[ferredoxin] + 2 H(+). It functions in the pathway isoprenoid biosynthesis; dimethylallyl diphosphate biosynthesis; dimethylallyl diphosphate from (2E)-4-hydroxy-3-methylbutenyl diphosphate: step 1/1. The protein operates within isoprenoid biosynthesis; isopentenyl diphosphate biosynthesis via DXP pathway; isopentenyl diphosphate from 1-deoxy-D-xylulose 5-phosphate: step 6/6. Catalyzes the conversion of 1-hydroxy-2-methyl-2-(E)-butenyl 4-diphosphate (HMBPP) into a mixture of isopentenyl diphosphate (IPP) and dimethylallyl diphosphate (DMAPP). Acts in the terminal step of the DOXP/MEP pathway for isoprenoid precursor biosynthesis. The protein is 4-hydroxy-3-methylbut-2-enyl diphosphate reductase of Rhizobium etli (strain CIAT 652).